Consider the following 571-residue polypeptide: Cationic amino acid transporter 8 (571 aa).

A glycan (N-linked (GlcNAc...) asparagine) is linked at Asn35. 6 consecutive transmembrane segments (helical) span residues Phe39–Trp59, Ser94–Tyr114, Ile117–Leu137, Phe148–Ile168, Thr177–Leu197, and Ile217–Phe237. N-linked (GlcNAc...) asparagine glycans are attached at residues Asn298, Asn325, and Asn346. The helical transmembrane segment at Leu365–Phe385 threads the bilayer. A glycan (N-linked (GlcNAc...) asparagine) is linked at Asn386. Helical transmembrane passes span Ser405–Gly425, Ser433–Ile453, Val461–Ile481, Val488–Cys508, and Val528–Phe548.

Belongs to the SLC43A transporter (TC 2.A.1.44) family.

The protein localises to the membrane. It catalyses the reaction L-arginine(in) = L-arginine(out). In terms of biological role, sodium-independent cationic amino acid transporter. Transports L-arginine, L-lysine, L-histidine and L-ornithine. This chain is Cationic amino acid transporter 8, found in Plasmodium vivax (strain Salvador I).